A 788-amino-acid polypeptide reads, in one-letter code: MAQRNGMSPRPPPLGRGRGAGGPSGVGSSPPSSCVPMGATSTAGTGASAAPTATPGHGVHRVEPRGPPGAPPSSGNNSNFWHGPERLLLSQIPVERQALTELEYQAMGAVWRAAFLANSTGRAMRKWSQRDAGTLLPLGRPYGFYARVTPRSQMNGVGATDLRQLSPRDAWIVLVATVVHEVDPAADPTVGDKAGHPEGLCAQDGLYLALGAGFRVFVYDLANNTLILAARDADEWFRHGAGEVVRLYRCNRLGVGTPRATLLPQPALRQTLLRAEEATALGRELRRRWAGTTVALQTPGRRLQPMVLLGAWQELAQYEPFASAPHPASLLTAVRRHLNQRLCCGWLALGAVLPARWLGCAAGPATGTTSPPAASGTETEAAGGDAPCAMAGAVGSAVTIPPQPYGGAGGSAICVPNADAHAVVGADATAAAAAAAAAPTVMVGPTAMAGPAASGTVPRAMLVVVLDELGAVFGYCPLDGHVYPLAAELSHFLRAGVLGALALGRESAPAAEAARRLLPELDREQWERPRWDALHLHPRAALWAREPHGQLAFLLRPGRGEAEVLTLATKHPVICANVEDYLQDARRRADAQALGLDLATVVMEAGGQMIHKKTKKPKGKEDESVMKGKHSRYTRPTEPPLTPQASLGRALRRDDEDWKPSRVPGEDSWYDLDETFWVLGSNRKNDVYQRRWKKTVLRCGLEIDRPMPTVPKGCRPQTFTHEGIQLMGGATQEPLDTGLYAPSHVTSAFVPSVYMPPTVPYPDPAARLCRDMRRVTFSNVATHYHYNA.

Disordered regions lie at residues 1–82 (MAQR…NFWH) and 610–663 (IHKK…PSRV). Gly residues predominate over residues 16 to 25 (RGRGAGGPSG). A compositionally biased stretch (low complexity) spans 26–56 (VGSSPPSSCVPMGATSTAGTGASAAPTATPG). An RNA-binding region spans residues 74–248 (SGNNSNFWHG…HGAGEVVRLY (175 aa)). Residues 651 to 660 (LRRDDEDWKP) are compositionally biased toward basic and acidic residues. Positions 672–788 (LDETFWVLGS…NVATHYHYNA (117 aa)) are interaction with host EIF2AK2/PKR.

This sequence belongs to the herpesviridae US22 family. In terms of assembly, interacts with host EIF2AK2/PKR; this interaction retains EIF2AK2 to the host nucleus and prevents its activation. Interaction (via N-terminus) with host BECN1; this interaction inhibits host autophagy. Interacts with the viral DNA polymerase accessory subunit UL44. Interacts with host HSPA5.

The protein resides in the virion. The protein localises to the host cytoplasm. Its subcellular location is the host nucleus. In terms of biological role, inhibits the establishment of the antiviral state in the infected cell. Prevents the phosphorylation of the host eukaryotic translation initiation factor eIF-2alpha/EIF2S1 and thus the shutoff of viral and cellular protein synthesis by directly interacting with EIF2AK2/PKR. Prevents stress granule formation in response to eIF-2alpha/EIF2S1 phosphorylation, thereby rescuing viral replication and protein synthesis. Also inhibits host autophagy by interacting with host Beclin-1/BECN1. This is Protein TRS1 (TRS1) from Human cytomegalovirus (strain Merlin) (HHV-5).